Consider the following 514-residue polypeptide: MTTAKRPLALLILDGWGYRENTHNNAIFHANTPVLDRLNAQYPHSLISGSGLDVGLPDGQMGNSEVGHINLGSGRVVYQELTRISKAIADHEFEQNPALCDAVDSAIKAGGAVHIMGLLSPGGVHSHEEHIEAMCRMAVARGATKVYLHAFLDGRDTPPRSAKSSLSHFDDLFTTLGHGRIASIIGRYFAMDRDNRWDRVSQAYDLITQGKSKFQYDNAVTALEAAYERNENDEFVSSSAITDADGQVATLQDGDALIFMNFRADRARQITRSFINPDFDGFERAVVPKMHFVTLTEYAGDIKAPIAYPSENLVNTLGEVLQKQGRTQLRISETEKYAHVTFFFNGGKEEPFEGEDRILINSPKVATYDLQPEMSSAELTDKLVAAIESTKYDVIICNYPNGDMVGHTGNFDAAVKACEAVDACIGCVVDALAKVGGECIITADHGNAEQMTDETTGQAHTAHTSELVPFVFVGRDATIDEGGKLSDVAPTILTLIGEAIPAEMTGKPLIHIKE.

Residues Asp-14 and Ser-64 each contribute to the Mn(2+) site. The active-site Phosphoserine intermediate is the Ser-64. Substrate contacts are provided by residues His-125, 155–156 (RD), Arg-187, Arg-193, 263–266 (RADR), and Lys-336. Residues Asp-403, His-407, Asp-444, His-445, and His-463 each contribute to the Mn(2+) site.

Belongs to the BPG-independent phosphoglycerate mutase family. Monomer. It depends on Mn(2+) as a cofactor.

It carries out the reaction (2R)-2-phosphoglycerate = (2R)-3-phosphoglycerate. It participates in carbohydrate degradation; glycolysis; pyruvate from D-glyceraldehyde 3-phosphate: step 3/5. Catalyzes the interconversion of 2-phosphoglycerate and 3-phosphoglycerate. The sequence is that of 2,3-bisphosphoglycerate-independent phosphoglycerate mutase from Shewanella baltica (strain OS195).